Here is a 147-residue protein sequence, read N- to C-terminus: Putative pre-16S rRNA nuclease (147 aa).

The protein belongs to the YqgF nuclease family.

The protein localises to the cytoplasm. Functionally, could be a nuclease involved in processing of the 5'-end of pre-16S rRNA. The chain is Putative pre-16S rRNA nuclease from Ligilactobacillus salivarius (strain UCC118) (Lactobacillus salivarius).